The sequence spans 630 residues: WD repeat-containing protein 26 homolog (630 aa).

Residues 1–13 are compositionally biased toward low complexity; it reads MQSTSSTSSGSCS. Positions 1–90 are disordered; the sequence is MQSTSSTSSG…NNRENTSCSG (90 aa). A phosphoserine mark is found at Ser36 and Ser40. Composition is skewed to polar residues over residues 48–57 and 66–75; these read PSGSSAATNG and IVNNNGSSSR. The LisH domain occupies 96–128; sequence SNQEIIRLIGQYLHDVGLDKSVQTLMLESGCYL. The region spanning 129-190 is the CTLH domain; sequence EHPSATKFRE…EHLDDGNPLD (62 aa). WD repeat units follow at residues 312-351, 359-400, 404-443, 445-482, 485-524, 529-569, and 572-612; these read DHCD…LTLK, QAQL…LVVK, SLED…VDSW, GVRV…SDFD, REPH…LVRR, RQSN…PLAK, and GHTK…SSAT. Positions 604 to 630 are disordered; it reads PKPNGSSATTESDDCSSSSSSSSWNMT. Residues 609–630 are compositionally biased toward low complexity; that stretch reads SSATTESDDCSSSSSSSSWNMT.

It is found in the cytoplasm. Its subcellular location is the mitochondrion. G-beta-like protein involved in cell signal transduction. The chain is WD repeat-containing protein 26 homolog from Drosophila melanogaster (Fruit fly).